Here is a 603-residue protein sequence, read N- to C-terminus: Palladin (603 aa).

Positions 63–67 (FPPPP) are interaction with VASP. The residue at position 133 (Ser-133) is a Phosphoserine. Positions 134–156 (PPTPAALLSPTKEPPPLLAKPKL) are disordered. Thr-136 carries the post-translational modification Phosphothreonine. 4 positions are modified to phosphoserine: Ser-142, Ser-170, Ser-256, and Ser-261. An Ig-like C2-type 1 domain is found at 278-362 (PFFEMKLKHY…MAANTQGRVS (85 aa)). Positions 373–402 (NQRGRSPRSPPGHPHARRPRSRSRDSGDEN) are disordered. Ser-378, Ser-381, and Ser-393 each carry phosphoserine. Ser-395 is subject to Phosphoserine; by PKB/AKT1. Phosphoserine is present on Ser-398. Ig-like C2-type domains follow at residues 412–503 (PHFL…LVVA) and 511–601 (PVFI…ARLD). Interaction with EZR regions lie at residues 414–503 (FLQA…LVVA) and 513–603 (FIEK…LDVY). Residues Cys-433 and Cys-485 are joined by a disulfide bond.

The protein belongs to the myotilin/palladin family. Interacts with EPS8. Interacts with LASP1. Interacts with VASP. Interacts with ACTN. Interacts with SORBS2. Interacts with PFN1. Interacts with LPP. Interacts with SPIN90. Interacts with SRC. Interacts with EZR. Interacts with RAI14. In terms of processing, phosphorylated predominantly on serines and, to a lesser extent, on tyrosines. Phosphorylation at Ser-395 by PKB/AKT1 modulates cytoskeletal organization and cell motility. In terms of tissue distribution, in adult central nervous system is detected in the brain and spinal cord, specially in the olfactory bulb, cerebral and cerebellar cortices, hippocampus, amygdala, superior colluculus, and superficial laminae of the spinal dorsal horn.

The protein localises to the cytoplasm. The protein resides in the cytoskeleton. It is found in the cell junction. Its subcellular location is the focal adhesion. It localises to the myofibril. The protein localises to the sarcomere. The protein resides in the z line. It is found in the cell projection. Its subcellular location is the ruffle. It localises to the podosome. The protein localises to the lamellipodium. The protein resides in the axon. It is found in the growth cone. Functionally, cytoskeletal protein required for organization of normal actin cytoskeleton. Roles in establishing cell morphology, motility, cell adhesion and cell-extracellular matrix interactions in a variety of cell types. May function as a scaffolding molecule with the potential to influence both actin polymerization and the assembly of existing actin filaments into higher-order arrays. Binds to proteins that bind to either monomeric or filamentous actin. Localizes at sites where active actin remodeling takes place, such as lamellipodia and membrane ruffles. Different isoforms may have functional differences. Plays a role in neurite outgrowth and in the establishment of polarity during neuronal morphogenesis. Participates in the acquisition of the reactive astrocyte morphology. This chain is Palladin (Palld), found in Rattus norvegicus (Rat).